Here is a 545-residue protein sequence, read N- to C-terminus: Sensory neuron membrane protein 1 (545 aa).

Residues 1–10 (MELKERNFKK) are Cytoplasmic-facing. The helical transmembrane segment at 11–31 (IGLICVAVLLCGMVFSYGIFP) threads the bilayer. Residues 32 to 464 (SILRFMIKQN…LFLGLKFNAT (433 aa)) lie on the Extracellular side of the membrane. Asparagine 69, asparagine 214, and asparagine 227 each carry an N-linked (GlcNAc...) asparagine glycan. Cystine bridges form between cysteine 266–cysteine 331, cysteine 295–cysteine 351, and cysteine 333–cysteine 340. Asparagine 444 and asparagine 462 each carry an N-linked (GlcNAc...) asparagine glycan. The chain crosses the membrane as a helical span at residues 465–485 (VKWLTIIIGTVGAVGSAYMYF). Residues 486–545 (RKETKTTDVAPVDVSTPDTNPSSAKDGVVNVSLGRNLPPVIDGLDKPPKLRATELQQERY) are Cytoplasmic-facing.

The protein belongs to the CD36 family. In terms of tissue distribution, selectively expressed in antenna.

The protein localises to the cell membrane. Its function is as follows. Plays an olfactory role that is not restricted to pheromone sensitivity. The polypeptide is Sensory neuron membrane protein 1 (snmp1) (Anopheles gambiae (African malaria mosquito)).